A 199-amino-acid chain; its full sequence is Large ribosomal subunit protein bL25 (199 aa).

It belongs to the bacterial ribosomal protein bL25 family. CTC subfamily. Part of the 50S ribosomal subunit; part of the 5S rRNA/L5/L18/L25 subcomplex. Contacts the 5S rRNA. Binds to the 5S rRNA independently of L5 and L18.

Functionally, this is one of the proteins that binds to the 5S RNA in the ribosome where it forms part of the central protuberance. The sequence is that of Large ribosomal subunit protein bL25 from Syntrophobacter fumaroxidans (strain DSM 10017 / MPOB).